Here is a 60-residue protein sequence, read N- to C-terminus: Conotoxin PnMRCL-022 (60 aa).

Positions 1–22 (MRCLPVFVILLLLIASTPSVNA) are cleaved as a signal peptide. The propeptide occupies 23–45 (RPKTKDLASFHDNAKRTQHIFWS).

This sequence belongs to the conotoxin T superfamily. Post-translationally, contains 2 disulfide bonds that can be either 'C1-C3, C2-C4' or 'C1-C4, C2-C3', since these disulfide connectivities have been observed for conotoxins with cysteine framework V (for examples, see AC P0DQQ7 and AC P81755). Expressed by the venom duct.

It localises to the secreted. This is Conotoxin PnMRCL-022 from Conus pennaceus (Feathered cone).